Here is a 330-residue protein sequence, read N- to C-terminus: Anthranilate phosphoribosyltransferase (330 aa).

5-phospho-alpha-D-ribose 1-diphosphate is bound by residues glycine 79, 82–83 (GD), threonine 87, 89–92 (NIST), 107–115 (KHGNYGVSS), and serine 119. Glycine 79 is an anthranilate binding site. Residue serine 91 coordinates Mg(2+). Anthranilate is bound at residue asparagine 110. Arginine 165 is a binding site for anthranilate. Mg(2+)-binding residues include aspartate 223 and glutamate 224.

This sequence belongs to the anthranilate phosphoribosyltransferase family. Homodimer. Mg(2+) is required as a cofactor.

The catalysed reaction is N-(5-phospho-beta-D-ribosyl)anthranilate + diphosphate = 5-phospho-alpha-D-ribose 1-diphosphate + anthranilate. It participates in amino-acid biosynthesis; L-tryptophan biosynthesis; L-tryptophan from chorismate: step 2/5. Catalyzes the transfer of the phosphoribosyl group of 5-phosphorylribose-1-pyrophosphate (PRPP) to anthranilate to yield N-(5'-phosphoribosyl)-anthranilate (PRA). The protein is Anthranilate phosphoribosyltransferase of Flavobacterium psychrophilum (strain ATCC 49511 / DSM 21280 / CIP 103535 / JIP02/86).